Here is a 159-residue protein sequence, read N- to C-terminus: 2-C-methyl-D-erythritol 2,4-cyclodiphosphate synthase (159 aa).

Residues aspartate 9 and histidine 11 each contribute to the a divalent metal cation site. 4-CDP-2-C-methyl-D-erythritol 2-phosphate-binding positions include 9-11 (DVH) and 35-36 (HS). Histidine 43 is a binding site for a divalent metal cation. 4-CDP-2-C-methyl-D-erythritol 2-phosphate is bound by residues 57 to 59 (DIG), 62 to 66 (FPDTD), 133 to 136 (TTTE), phenylalanine 140, and arginine 143.

The protein belongs to the IspF family. As to quaternary structure, homotrimer. It depends on a divalent metal cation as a cofactor.

The catalysed reaction is 4-CDP-2-C-methyl-D-erythritol 2-phosphate = 2-C-methyl-D-erythritol 2,4-cyclic diphosphate + CMP. Its pathway is isoprenoid biosynthesis; isopentenyl diphosphate biosynthesis via DXP pathway; isopentenyl diphosphate from 1-deoxy-D-xylulose 5-phosphate: step 4/6. Functionally, involved in the biosynthesis of isopentenyl diphosphate (IPP) and dimethylallyl diphosphate (DMAPP), two major building blocks of isoprenoid compounds. Catalyzes the conversion of 4-diphosphocytidyl-2-C-methyl-D-erythritol 2-phosphate (CDP-ME2P) to 2-C-methyl-D-erythritol 2,4-cyclodiphosphate (ME-CPP) with a corresponding release of cytidine 5-monophosphate (CMP). The chain is 2-C-methyl-D-erythritol 2,4-cyclodiphosphate synthase from Mannheimia succiniciproducens (strain KCTC 0769BP / MBEL55E).